Here is a 191-residue protein sequence, read N- to C-terminus: Transmembrane protein 17B (191 aa).

The next 4 membrane-spanning stretches (helical) occupy residues 50–70 (MSLY…VVML), 83–103 (FILI…LYLG), 115–135 (LAGF…FQLF), and 147–167 (GVHI…FVAL).

The protein belongs to the TMEM17 family. Part of the tectonic-like complex (also named B9 complex).

Its subcellular location is the cell projection. It localises to the cilium membrane. Its function is as follows. Transmembrane component of the tectonic-like complex, a complex localized at the transition zone of primary cilia and acting as a barrier that prevents diffusion of transmembrane proteins between the cilia and plasma membranes. Required for ciliogenesis and sonic hedgehog/SHH signaling. The protein is Transmembrane protein 17B (Tmem17b) of Danio rerio (Zebrafish).